Consider the following 259-residue polypeptide: uncharacterized protein (259 aa).

This sequence belongs to the chlamydial CPn_0128/CT_035/TC_0305 family.

This is an uncharacterized protein from Chlamydia muridarum (strain MoPn / Nigg).